Consider the following 252-residue polypeptide: Flap endonuclease Xni (252 aa).

Asp105 contacts Mg(2+). The 89-residue stretch at 162–250 (ERTQFIDYLA…LNANLSQFRL (89 aa)) folds into the 5'-3' exonuclease domain. Residues Leu172, Ala173, Pro181, Val183, and Ile186 each coordinate K(+). Positions 185–190 (GIGPKS) are interaction with DNA.

It belongs to the Xni family. The cofactor is Mg(2+). K(+) is required as a cofactor.

In terms of biological role, has flap endonuclease activity. During DNA replication, flap endonucleases cleave the 5'-overhanging flap structure that is generated by displacement synthesis when DNA polymerase encounters the 5'-end of a downstream Okazaki fragment. This Shewanella woodyi (strain ATCC 51908 / MS32) protein is Flap endonuclease Xni.